A 388-amino-acid chain; its full sequence is Processive diacylglycerol beta-glucosyltransferase (388 aa).

Belongs to the glycosyltransferase 28 family. UgtP subfamily.

Its subcellular location is the cell membrane. The enzyme catalyses a 1,2-diacyl-3-O-(beta-D-glucopyranosyl)-sn-glycerol + UDP-alpha-D-glucose = a 1,2-diacyl-3-O-(beta-D-Glc-(1-&gt;6)-beta-D-Glc)-sn-glycerol + UDP + H(+). It carries out the reaction a 1,2-diacyl-3-O-(beta-D-Glc-(1-&gt;6)-beta-D-Glc)-sn-glycerol + UDP-alpha-D-glucose = a 1,2-diacyl-3-O-(beta-D-Glc-(1-&gt;6)-beta-D-Glc-(1-&gt;6)-beta-D-Glc)-sn-glycerol + UDP + H(+). The catalysed reaction is a 1,2-diacyl-sn-glycerol + UDP-alpha-D-glucose = a 1,2-diacyl-3-O-(beta-D-glucopyranosyl)-sn-glycerol + UDP + H(+). The protein operates within glycolipid metabolism; diglucosyl-diacylglycerol biosynthesis. Its function is as follows. Processive glucosyltransferase involved in the biosynthesis of both the bilayer- and non-bilayer-forming membrane glucolipids. Is able to successively transfer up to three glucosyl residues to diacylglycerol (DAG), thereby catalyzing the formation of beta-monoglucosyl-DAG (3-O-(beta-D-glucopyranosyl)-1,2-diacyl-sn-glycerol), beta-diglucosyl-DAG (3-O-(beta-D-glucopyranosyl-beta-(1-&gt;6)-D-glucopyranosyl)-1,2-diacyl-sn-glycerol) and beta-triglucosyl-DAG (3-O-(beta-D-glucopyranosyl-beta-(1-&gt;6)-D-glucopyranosyl-beta-(1-&gt;6)-D-glucopyranosyl)-1,2-diacyl-sn-glycerol). Beta-diglucosyl-DAG is the predominant glycolipid found in Bacillales and is also used as a membrane anchor for lipoteichoic acid (LTA). This Bacillus cereus (strain G9842) protein is Processive diacylglycerol beta-glucosyltransferase.